A 400-amino-acid chain; its full sequence is Acetate kinase (400 aa).

Asparagine 7 lines the Mg(2+) pocket. Residue lysine 14 coordinates ATP. Residue arginine 91 participates in substrate binding. The Proton donor/acceptor role is filled by aspartate 148. ATP is bound by residues 208 to 212, 284 to 286, and 332 to 336; these read HLGNG, DMR, and GVGEN. Glutamate 384 contributes to the Mg(2+) binding site.

The protein belongs to the acetokinase family. Homodimer. The cofactor is Mg(2+). It depends on Mn(2+) as a cofactor.

It localises to the cytoplasm. The enzyme catalyses acetate + ATP = acetyl phosphate + ADP. Its pathway is metabolic intermediate biosynthesis; acetyl-CoA biosynthesis; acetyl-CoA from acetate: step 1/2. In terms of biological role, catalyzes the formation of acetyl phosphate from acetate and ATP. Can also catalyze the reverse reaction. The protein is Acetate kinase of Coprothermobacter proteolyticus (strain ATCC 35245 / DSM 5265 / OCM 4 / BT).